The following is a 305-amino-acid chain: Nucleotide-binding protein Saro_2904 (305 aa).

15 to 22 (GLLGAGKT) provides a ligand contact to ATP. 68-71 (DTRT) provides a ligand contact to GTP.

Belongs to the RapZ-like family.

Its function is as follows. Displays ATPase and GTPase activities. In Novosphingobium aromaticivorans (strain ATCC 700278 / DSM 12444 / CCUG 56034 / CIP 105152 / NBRC 16084 / F199), this protein is Nucleotide-binding protein Saro_2904.